Here is a 916-residue protein sequence, read N- to C-terminus: Probable serine/threonine-protein kinase DDB_G0267514 (916 aa).

Disordered regions lie at residues 283-311 (SGGGNSGSGGGNSGSGGSSGNGTSGSGGS), 461-518 (NNNQ…SPLD), and 550-646 (FNNQ…EPPS). Composition is skewed to low complexity over residues 461-493 (NNNQNNQNNNQQQQQYQQQQHHQQQQQQYQQQP) and 550-622 (FNNQ…LINN). Over residues 623-646 (HSPNQYNNQGNILKNSGSVVEPPS) the composition is skewed to polar residues. Residues 662 to 916 (LKISSKLGEG…EILNLLNEIP (255 aa)) enclose the Protein kinase domain. Residues 668–676 (LGEGTFGVV) and lysine 689 each bind ATP. Aspartate 784 functions as the Proton acceptor in the catalytic mechanism.

The protein belongs to the protein kinase superfamily. TKL Ser/Thr protein kinase family.

The catalysed reaction is L-seryl-[protein] + ATP = O-phospho-L-seryl-[protein] + ADP + H(+). The enzyme catalyses L-threonyl-[protein] + ATP = O-phospho-L-threonyl-[protein] + ADP + H(+). This Dictyostelium discoideum (Social amoeba) protein is Probable serine/threonine-protein kinase DDB_G0267514.